The chain runs to 213 residues: Orotate phosphoribosyltransferase (213 aa).

5-phospho-alpha-D-ribose 1-diphosphate is bound at residue lysine 26. 34–35 (FF) contributes to the orotate binding site. Residues 72–73 (YK), arginine 99, lysine 100, lysine 103, histidine 105, and 124–132 (DDVITAGTA) each bind 5-phospho-alpha-D-ribose 1-diphosphate. Orotate is bound by residues threonine 128 and arginine 156.

It belongs to the purine/pyrimidine phosphoribosyltransferase family. PyrE subfamily. Homodimer. Mg(2+) serves as cofactor.

The catalysed reaction is orotidine 5'-phosphate + diphosphate = orotate + 5-phospho-alpha-D-ribose 1-diphosphate. Its pathway is pyrimidine metabolism; UMP biosynthesis via de novo pathway; UMP from orotate: step 1/2. Its function is as follows. Catalyzes the transfer of a ribosyl phosphate group from 5-phosphoribose 1-diphosphate to orotate, leading to the formation of orotidine monophosphate (OMP). In Thioalkalivibrio sulfidiphilus (strain HL-EbGR7), this protein is Orotate phosphoribosyltransferase.